Here is a 330-residue protein sequence, read N- to C-terminus: Putative UV-damage endonuclease (330 aa).

Belongs to the uve1/UvsE family.

It localises to the virion. Endonuclease for the repair of UV-irradiated DNA. The protein is Putative UV-damage endonuclease of Acanthamoeba polyphaga mimivirus (APMV).